The sequence spans 298 residues: Ethanolamine ammonia-lyase small subunit (298 aa).

The adenosylcob(III)alamin site is built by V210, E231, and C261.

It belongs to the EutC family. The basic unit is a heterodimer which dimerizes to form tetramers. The heterotetramers trimerize; 6 large subunits form a core ring with 6 small subunits projecting outwards. Requires adenosylcob(III)alamin as cofactor.

The protein resides in the bacterial microcompartment. The enzyme catalyses ethanolamine = acetaldehyde + NH4(+). It participates in amine and polyamine degradation; ethanolamine degradation. Catalyzes the deamination of various vicinal amino-alcohols to oxo compounds. Allows this organism to utilize ethanolamine as the sole source of nitrogen and carbon in the presence of external vitamin B12. This Salmonella agona (strain SL483) protein is Ethanolamine ammonia-lyase small subunit.